Consider the following 1158-residue polypeptide: Formin-C (1158 aa).

3 disordered regions span residues 8–29, 417–523, and 990–1052; these read INGN…PSVS, PNTS…LSCL, and INNN…NNSQ. Positions 20–388 constitute a GBD/FH3 domain; the sequence is QQPQQNPSVS…EYSQRKLEMI (369 aa). Residues 417–437 are compositionally biased toward polar residues; that stretch reads PNTSDLFDSSTLEDTYDGNND. The segment covering 438-481 has biased composition (low complexity); it reads TNSCTSISTSSTPIHISQPTTLIVPSTTPNHPPQQSQQTPPLQL. The stretch at 479-515 forms a coiled coil; it reads LQLQKEKEKEKEKEKEKEKEKEKEQQQQQQQSNKQST. Residues 482 to 503 show a composition bias toward basic and acidic residues; that stretch reads QKEKEKEKEKEKEKEKEKEKEQ. The region spanning 601 to 998 is the FH2 domain; sequence TKSPITPSKR…IINNNNNNNN (398 aa). A DAD domain is found at 1134–1158; it reads SDDPMAVIIEALKTGSPNDMVKRAF.

It belongs to the formin homology family. Diaphanous subfamily. Interacts (via GBD/FH3 domain) with activated Rho-GTPases.

The protein resides in the cytoplasm. It is found in the cytosol. The protein localises to the cytoskeleton. Formins play an important role in the nucleation of actin and the formation of linear actin filaments. The protein is Formin-C (forC) of Dictyostelium discoideum (Social amoeba).